The following is a 622-amino-acid chain: Chaperone protein DnaK (622 aa).

A Phosphothreonine; by autocatalysis modification is found at Thr197. Composition is skewed to basic and acidic residues over residues 515-528 (LHKEEDRKRKEAVE) and 575-614 (ASKEEIESKMKTLSEVSHKLAENMYKKDEKPSDDKKKKDD). Disordered stretches follow at residues 515–537 (LHKEEDRKRKEAVEARNSADSLV) and 575–622 (ASKE…AEVE).

Belongs to the heat shock protein 70 family.

Functionally, acts as a chaperone. This Campylobacter lari (strain RM2100 / D67 / ATCC BAA-1060) protein is Chaperone protein DnaK.